A 102-amino-acid polypeptide reads, in one-letter code: MYAIIKHSGKQYKVSVGDDLKLDHFEAESKASIEVSEVLAINDKELKVGAPFVAGAKVVLEVINHGKDKKVVIYKKRRRKDSKLKRGFRRQFTRVVVKDIKA.

The protein belongs to the bacterial ribosomal protein bL21 family. Part of the 50S ribosomal subunit. Contacts protein L20.

In terms of biological role, this protein binds to 23S rRNA in the presence of protein L20. The polypeptide is Large ribosomal subunit protein bL21 (Campylobacter jejuni subsp. doylei (strain ATCC BAA-1458 / RM4099 / 269.97)).